Reading from the N-terminus, the 265-residue chain is Glycosylphosphatidylinositol anchor biosynthesis protein 11 (265 aa).

2 helical membrane-spanning segments follow: residues 49–69 (LLVV…SGLT) and 79–99 (GFLT…INLL). Residues Asn111 and Asn112 are each glycosylated (N-linked (GlcNAc...) asparagine). Helical transmembrane passes span 137 to 157 (IFVS…MGAP), 166 to 186 (LYLS…LSNL), 209 to 229 (ILSS…PIPL), and 240 to 260 (ITLL…SLIV).

The protein belongs to the PIGF family.

The protein localises to the endoplasmic reticulum membrane. It participates in glycolipid biosynthesis; glycosylphosphatidylinositol-anchor biosynthesis. In terms of biological role, acts in the GPI biosynthetic pathway between GlcNAc-PI synthesis and GPI transfer to protein. This Candida albicans (strain SC5314 / ATCC MYA-2876) (Yeast) protein is Glycosylphosphatidylinositol anchor biosynthesis protein 11 (GPI11).